The chain runs to 538 residues: Bifunctional purine biosynthesis protein PurH (538 aa).

In terms of domain architecture, MGS-like spans Ile-8 to Thr-158.

Belongs to the PurH family.

The catalysed reaction is (6R)-10-formyltetrahydrofolate + 5-amino-1-(5-phospho-beta-D-ribosyl)imidazole-4-carboxamide = 5-formamido-1-(5-phospho-D-ribosyl)imidazole-4-carboxamide + (6S)-5,6,7,8-tetrahydrofolate. It carries out the reaction IMP + H2O = 5-formamido-1-(5-phospho-D-ribosyl)imidazole-4-carboxamide. The protein operates within purine metabolism; IMP biosynthesis via de novo pathway; 5-formamido-1-(5-phospho-D-ribosyl)imidazole-4-carboxamide from 5-amino-1-(5-phospho-D-ribosyl)imidazole-4-carboxamide (10-formyl THF route): step 1/1. It functions in the pathway purine metabolism; IMP biosynthesis via de novo pathway; IMP from 5-formamido-1-(5-phospho-D-ribosyl)imidazole-4-carboxamide: step 1/1. The chain is Bifunctional purine biosynthesis protein PurH from Rhizobium johnstonii (strain DSM 114642 / LMG 32736 / 3841) (Rhizobium leguminosarum bv. viciae).